The following is a 559-amino-acid chain: NXPE family member 3 (559 aa).

The signal sequence occupies residues 1–30 (MWTNFFKLRLFCCLLAVLMVVVLVVNVTQV). N-linked (GlcNAc...) asparagine glycans are attached at residues Asn26, Asn237, and Asn346.

The protein belongs to the NXPE family.

The protein resides in the secreted. The sequence is that of NXPE family member 3 (NXPE3) from Pongo abelii (Sumatran orangutan).